Reading from the N-terminus, the 585-residue chain is PiggyBac transposable element-derived protein 4 (585 aa).

Positions 1-73 (MSNPRKRSIP…STSSDSGRSM (73 aa)) are disordered. The span at 25–40 (DSFDESDFSEIDDSDN) shows a compositional bias: acidic residues. Over residues 47–61 (EADKIRPLSHLESDG) the composition is skewed to basic and acidic residues. Over residues 62 to 72 (KSSTSSDSGRS) the composition is skewed to low complexity.

The chain is PiggyBac transposable element-derived protein 4 (PGBD4) from Homo sapiens (Human).